The following is a 117-amino-acid chain: DNA-directed RNA polymerase subunit omega (117 aa).

The span at 96–105 shows a compositional bias: basic and acidic residues; sequence KEEAEEEAKQ. The interval 96 to 117 is disordered; that stretch reads KEEAEEEAKQKNSRAAKAAAAE. Residues 108–117 show a composition bias toward low complexity; the sequence is SRAAKAAAAE.

It belongs to the RNA polymerase subunit omega family. The RNAP catalytic core consists of 2 alpha, 1 beta, 1 beta' and 1 omega subunit. When a sigma factor is associated with the core the holoenzyme is formed, which can initiate transcription.

The enzyme catalyses RNA(n) + a ribonucleoside 5'-triphosphate = RNA(n+1) + diphosphate. Its function is as follows. Promotes RNA polymerase assembly. Latches the N- and C-terminal regions of the beta' subunit thereby facilitating its interaction with the beta and alpha subunits. This Lactococcus lactis subsp. cremoris (strain SK11) protein is DNA-directed RNA polymerase subunit omega.